Reading from the N-terminus, the 208-residue chain is Large ribosomal subunit protein uL4 (208 aa).

Residues 44–79 (QRQGTHKSKERSEISGSTRKLGRQKGGGGARRGDIN) are disordered.

It belongs to the universal ribosomal protein uL4 family. In terms of assembly, part of the 50S ribosomal subunit.

One of the primary rRNA binding proteins, this protein initially binds near the 5'-end of the 23S rRNA. It is important during the early stages of 50S assembly. It makes multiple contacts with different domains of the 23S rRNA in the assembled 50S subunit and ribosome. Its function is as follows. Forms part of the polypeptide exit tunnel. The sequence is that of Large ribosomal subunit protein uL4 from Phocaeicola vulgatus (strain ATCC 8482 / DSM 1447 / JCM 5826 / CCUG 4940 / NBRC 14291 / NCTC 11154) (Bacteroides vulgatus).